Here is a 156-residue protein sequence, read N- to C-terminus: Small ribosomal subunit protein uS7 (156 aa).

Belongs to the universal ribosomal protein uS7 family. As to quaternary structure, part of the 30S ribosomal subunit. Contacts proteins S9 and S11.

Functionally, one of the primary rRNA binding proteins, it binds directly to 16S rRNA where it nucleates assembly of the head domain of the 30S subunit. Is located at the subunit interface close to the decoding center, probably blocks exit of the E-site tRNA. The polypeptide is Small ribosomal subunit protein uS7 (Rhizobium leguminosarum bv. trifolii (strain WSM2304)).